The sequence spans 466 residues: MSNKMWGGRFASGPDAIMEEINASIGFDYRLAMQDIAGSKAHVAMLADVGIVSADDAADITQGLEAIKAEIESGAFTFSRALEDIHMNVESRLAALIGPAAGRLHTARSRNDQVALDFRLWVRDTIDALDGQLRGLQLALAEKAKLYAGAVMPGFTHMQSAQPVTFGHHLLAYVEMFARDRSRLRDARARLNESPLGAAALAGTSFPIDRHATARALGFDRPTANSLDSVSDRDFVLETLSAAAIAAVHLSRFAEEIVLWSTPQFGFARLSDKFSTGSSIMPQKRNPDAAELVRGKAGRVIGALTGLLVVMKGLPLTYSKDMQEDKEGAFDALHSLSLCLAAMTGMVKDIEPDTERMKAAAGAGYATATDLADWLVKALGLPFREAHHVTGRLVAAASAQDKGLEELALAEMQAVEPRINAGVFAVLGVENSVRSRMSYGGTAPANVSEQAERWLGALAAEPASKI.

The protein belongs to the lyase 1 family. Argininosuccinate lyase subfamily.

The protein resides in the cytoplasm. The catalysed reaction is 2-(N(omega)-L-arginino)succinate = fumarate + L-arginine. It participates in amino-acid biosynthesis; L-arginine biosynthesis; L-arginine from L-ornithine and carbamoyl phosphate: step 3/3. The chain is Argininosuccinate lyase from Methylocella silvestris (strain DSM 15510 / CIP 108128 / LMG 27833 / NCIMB 13906 / BL2).